Reading from the N-terminus, the 784-residue chain is LPS-assembly protein LptD (784 aa).

The first 24 residues, 1-24 (MKKRIPTLLATMIATALYSQQGLA), serve as a signal peptide directing secretion. 2 disulfides stabilise this stretch: Cys31/Cys724 and Cys173/Cys725.

The protein belongs to the LptD family. In terms of assembly, component of the lipopolysaccharide transport and assembly complex. Interacts with LptE and LptA. In terms of processing, contains two intramolecular disulfide bonds.

It is found in the cell outer membrane. Together with LptE, is involved in the assembly of lipopolysaccharide (LPS) at the surface of the outer membrane. This is LPS-assembly protein LptD from Shigella sonnei (strain Ss046).